Consider the following 528-residue polypeptide: GMP synthase [glutamine-hydrolyzing] (528 aa).

A Glutamine amidotransferase type-1 domain is found at 13–204 (SILILDFGSQ…VYKISCCTAD (192 aa)). The active-site Nucleophile is C90. Active-site residues include H178 and E180. A GMPS ATP-PPase domain is found at 205–403 (WTTETYIEET…LGLPDEIIKR (199 aa)). 232 to 238 (SGGVDSS) is an ATP binding site.

Homodimer.

It carries out the reaction XMP + L-glutamine + ATP + H2O = GMP + L-glutamate + AMP + diphosphate + 2 H(+). The protein operates within purine metabolism; GMP biosynthesis; GMP from XMP (L-Gln route): step 1/1. Functionally, catalyzes the synthesis of GMP from XMP. The sequence is that of GMP synthase [glutamine-hydrolyzing] from Prochlorococcus marinus (strain AS9601).